The chain runs to 243 residues: UPF0246 protein MGAS10750_Spy1880 (243 aa).

It belongs to the UPF0246 family.

This is UPF0246 protein MGAS10750_Spy1880 from Streptococcus pyogenes serotype M4 (strain MGAS10750).